Reading from the N-terminus, the 52-residue chain is Alpha-crystallin B chain (52 aa).

This sequence belongs to the small heat shock protein (HSP20) family. Homodimer. Aggregates with homologous proteins, including alpha-A-crystallin and the small heat shock protein HSPB1, to form large heteromeric complexes.

May contribute to the transparency and refractive index of the lens. The chain is Alpha-crystallin B chain (CRYAB) from Trachemys scripta elegans (Red-eared slider turtle).